A 962-amino-acid chain; its full sequence is Protease 3 (962 aa).

An N-terminal signal peptide occupies residues M1–A23. H88 contacts Zn(2+). E91 (proton acceptor) is an active-site residue. Zn(2+) contacts are provided by H92 and E169.

This sequence belongs to the peptidase M16 family. As to quaternary structure, monomer. The cofactor is Zn(2+).

The protein localises to the periplasm. The catalysed reaction is Preferential cleavage of 16-Tyr-|-Leu-17 and 25-Phe-|-Tyr-26 bonds of oxidized insulin B chain. Also acts on other substrates of Mw less than 7 kDa such as insulin and glucagon.. In terms of biological role, endopeptidase that degrades small peptides of less than 7 kDa, such as glucagon and insulin. The sequence is that of Protease 3 (ptrA) from Salmonella typhi.